The sequence spans 540 residues: 2,3-bisphosphoglycerate-independent phosphoglycerate mutase (540 aa).

2 residues coordinate Mn(2+): Asp-13 and Ser-63. The active-site Phosphoserine intermediate is Ser-63. Substrate contacts are provided by residues His-124, 154-155, Arg-186, Arg-192, 262-265, and Lys-356; these read RD and RPDR. The Mn(2+) site is built by Asp-423, His-427, Asp-464, His-465, and His-483.

This sequence belongs to the BPG-independent phosphoglycerate mutase family. As to quaternary structure, monomer. It depends on Mn(2+) as a cofactor.

The catalysed reaction is (2R)-2-phosphoglycerate = (2R)-3-phosphoglycerate. It functions in the pathway carbohydrate degradation; glycolysis; pyruvate from D-glyceraldehyde 3-phosphate: step 3/5. Catalyzes the interconversion of 2-phosphoglycerate and 3-phosphoglycerate. This Chloroflexus aggregans (strain MD-66 / DSM 9485) protein is 2,3-bisphosphoglycerate-independent phosphoglycerate mutase.